The following is a 444-amino-acid chain: Glutamyl-tRNA reductase (444 aa).

Residues 49–52 (TCNR), serine 109, 114–116 (ETQ), and glutamine 120 contribute to the substrate site. Cysteine 50 acts as the Nucleophile in catalysis. 189–194 (GAGKMG) provides a ligand contact to NADP(+).

This sequence belongs to the glutamyl-tRNA reductase family. As to quaternary structure, homodimer.

The catalysed reaction is (S)-4-amino-5-oxopentanoate + tRNA(Glu) + NADP(+) = L-glutamyl-tRNA(Glu) + NADPH + H(+). Its pathway is porphyrin-containing compound metabolism; protoporphyrin-IX biosynthesis; 5-aminolevulinate from L-glutamyl-tRNA(Glu): step 1/2. Catalyzes the NADPH-dependent reduction of glutamyl-tRNA(Glu) to glutamate 1-semialdehyde (GSA). The protein is Glutamyl-tRNA reductase of Bacillus cereus (strain G9842).